A 915-amino-acid chain; its full sequence is Hexokinase HKDC1 (915 aa).

The interval 1–20 (MFAVHLVAFYFTKLKEDQIK) is mitochondrial-binding peptide (MBP). Hexokinase domains follow at residues 16–458 (EDQI…MVTA) and 464–903 (QAQR…LITA). Residues R30 and 84-89 (DLGGSK) each bind ATP. A hexokinase small subdomain 1 region spans residues 73 to 207 (DGSENGEFLS…DLDVDILALV (135 aa)). 84–91 (DLGGSKFR) is a D-glucose 6-phosphate binding site. D-glucose contacts are provided by residues S155, 172-173 (TK), and 208-209 (ND). The interval 208–447 (NDTVGTMMTC…CDVRFLLSES (240 aa)) is hexokinase large subdomain 1. The D-glucose 6-phosphate site is built by D209 and T232. Residues N235, E260, and 291–294 (QLFE) contribute to the D-glucose site. 413 to 415 (DGT) lines the D-glucose 6-phosphate pocket. Position 425-426 (425-426 (KR)) interacts with ATP. D-glucose 6-phosphate contacts are provided by residues S449 and 532–536 (DLGGT). The tract at residues 521-652 (DGTEKGKFLA…EFDLDIVAIV (132 aa)) is hexokinase small subdomain 2. 532–537 (DLGGTN) serves as a coordination point for ATP. Residues 600–601 (SF), 617–618 (TK), and 653–654 (ND) contribute to the D-glucose site. The hexokinase large subdomain 2 stretch occupies residues 653-892 (NDTVGTMMTC…CDVTFMLSED (240 aa)). 2 residues coordinate D-glucose 6-phosphate: D654 and T677. An ATP-binding site is contributed by T677. D-glucose-binding positions include 679–680 (SN), E705, and E739. ATP-binding positions include 744–745 (GM), 781–785 (TKFLS), and 860–864 (TLYKL). D-glucose 6-phosphate contacts are provided by residues 858–860 (DGT) and S894.

This sequence belongs to the hexokinase family. Widely expressed. Detected in retina, brain, cerebellum, liver, lung, kidney, spleen, pancreas and intestine.

Its subcellular location is the cytoplasm. The protein resides in the mitochondrion membrane. The protein localises to the photoreceptor inner segment. The catalysed reaction is a D-hexose + ATP = a D-hexose 6-phosphate + ADP + H(+). It carries out the reaction D-glucose + ATP = D-glucose 6-phosphate + ADP + H(+). It functions in the pathway carbohydrate metabolism; hexose metabolism. Its pathway is carbohydrate degradation; glycolysis; D-glyceraldehyde 3-phosphate and glycerone phosphate from D-glucose: step 1/4. Functionally, catalyzes the phosphorylation of hexose to hexose 6-phosphate, although at very low level compared to other hexokinases. Has low glucose phosphorylating activity compared to other hexokinases. Involved in glucose homeostasis and hepatic lipid accumulation. Required to maintain whole-body glucose homeostasis during pregnancy; however additional evidences are required to confirm this role. The chain is Hexokinase HKDC1 from Mus musculus (Mouse).